A 243-amino-acid chain; its full sequence is Ribonuclease 3 (243 aa).

The region spanning 10 to 146 (VNRFRKRFDT…FIGALYLDQG (137 aa)) is the RNase III domain. Residue glutamate 59 coordinates Mg(2+). Aspartate 63 is an active-site residue. Mg(2+)-binding residues include aspartate 132 and glutamate 135. Residue glutamate 135 is part of the active site. A DRBM domain is found at 172–241 (DFKTQFQEYV…AESAYKQLKQ (70 aa)). The segment covering 219-231 (GKGKTKKESEQRA) has biased composition (basic and acidic residues). The tract at residues 219–243 (GKGKTKKESEQRAAESAYKQLKQIK) is disordered.

This sequence belongs to the ribonuclease III family. As to quaternary structure, homodimer. Mg(2+) serves as cofactor.

It localises to the cytoplasm. The enzyme catalyses Endonucleolytic cleavage to 5'-phosphomonoester.. Digests double-stranded RNA. Involved in the processing of primary rRNA transcript to yield the immediate precursors to the large and small rRNAs (23S and 16S). Processes some mRNAs, and tRNAs when they are encoded in the rRNA operon. Processes pre-crRNA and tracrRNA of type II CRISPR loci if present in the organism. The polypeptide is Ribonuclease 3 (Staphylococcus aureus (strain USA300)).